Here is a 438-residue protein sequence, read N- to C-terminus: 2-(3-amino-3-carboxypropyl)histidine synthase subunit 1 (438 aa).

The tract at residues 1–24 (MAALVVSETAEPGSRVGPGRGRIS) is disordered. 3 residues coordinate [4Fe-4S] cluster: cysteine 110, cysteine 214, and cysteine 342. The interval 402–438 (LCQPASDKVQQGSRGGSPAPACESCNCADQKATSPAP) is disordered. Phosphoserine is present on serine 418.

It belongs to the DPH1/DPH2 family. DPH1 subfamily. As to quaternary structure, component of the 2-(3-amino-3-carboxypropyl)histidine synthase complex composed of DPH1, DPH2, DPH3 and a NADH-dependent reductase. Interacts with DPH2. Interacts with RBM8A. [4Fe-4S] cluster serves as cofactor. In terms of tissue distribution, strongly expressed in kidney and liver. Moderately expressed in brain, skin and testis. Weakly expressed in heart, lung, small intestine, spleen, stomach and thymus.

The protein localises to the nucleus. The protein resides in the cytoplasm. The catalysed reaction is L-histidyl-[translation elongation factor 2] + S-adenosyl-L-methionine = 2-[(3S)-amino-3-carboxypropyl]-L-histidyl-[translation elongation factor 2] + S-methyl-5'-thioadenosine + H(+). It functions in the pathway protein modification; peptidyl-diphthamide biosynthesis. Catalyzes the first step of diphthamide biosynthesis, a post-translational modification of histidine which occurs in elongation factor 2. DPH1 and DPH2 transfer a 3-amino-3-carboxypropyl (ACP) group from S-adenosyl-L-methionine (SAM) to a histidine residue, the reaction is assisted by a reduction system comprising DPH3 and a NADH-dependent reductase. Acts as a tumor suppressor. The protein is 2-(3-amino-3-carboxypropyl)histidine synthase subunit 1 of Mus musculus (Mouse).